The following is a 196-amino-acid chain: Peptidyl-tRNA hydrolase (196 aa).

TRNA is bound at residue tyrosine 18. The active-site Proton acceptor is the histidine 23. 3 residues coordinate tRNA: phenylalanine 69, asparagine 71, and asparagine 117.

It belongs to the PTH family. Monomer.

The protein resides in the cytoplasm. It carries out the reaction an N-acyl-L-alpha-aminoacyl-tRNA + H2O = an N-acyl-L-amino acid + a tRNA + H(+). Functionally, hydrolyzes ribosome-free peptidyl-tRNAs (with 1 or more amino acids incorporated), which drop off the ribosome during protein synthesis, or as a result of ribosome stalling. Catalyzes the release of premature peptidyl moieties from peptidyl-tRNA molecules trapped in stalled 50S ribosomal subunits, and thus maintains levels of free tRNAs and 50S ribosomes. The protein is Peptidyl-tRNA hydrolase of Marinobacter nauticus (strain ATCC 700491 / DSM 11845 / VT8) (Marinobacter aquaeolei).